The sequence spans 668 residues: MDTASSPPSAERKRAGWSRLLGARRGSAVVKKCPFSLELAEGGPEGSTVYAPIAPTGAPGLAPPMSTPVSPAPAPADLGPRPRVSLDPRVSIYSARRPLLARTHIQGRVYNFLERPTGWKCFVYHFTVFLIVLVCLIFSVLSTIEQYAALATGTLFWMEIVLVVFFGTEYVVRLWSAGCRSKYVGIWGRLRFARKPISIIDLIVVVASMVVLCVGSKGQVFATSAIRGIRFLQILRMLHVDRQGGTWRLLGSVVFIHRQELITTLYIGFLGLIFSSYFVYLAEKDAVNESGRIEFGSYADALWWGVVTVTTIGYGDKVPQTWVGKTIASCFSVFAISFFALPAGILGSGFALKVQQKQRQKHFNRQIPAAASLIQTAWRCYAAENPDSATWKIYVRKPARSHTLLSPSPKPKKSVMVKKKKFKLDKDNGMSPGEKMFNVPHITYDPPEDRRPDHFSIDGYDSSVRKSPTLLEVSTPHFLRTNSFAEDLDLEGETLLTPITHVSQLRDHHRATIKVIRRMQYFVAKKKFQQARKPYDVRDVIEQYSQGHLNLMVRIKELQRRLDQSIGKPSLFIPISEKSKDRGSNTIGARLNRVEDKVTQLDQRLVIITDMLHQLLSMQQGGPTCNSRSQVVASNEGGSINPELFLPSNSLPTYEQLTVPQTGPDEGS.

The Cytoplasmic portion of the chain corresponds to 1-119 (MDTASSPPSA…YNFLERPTGW (119 aa)). S27 carries the post-translational modification Phosphoserine; by PKA. A helical transmembrane segment spans residues 120–141 (KCFVYHFTVFLIVLVCLIFSVL). Residues 142–152 (STIEQYAALAT) lie on the Extracellular side of the membrane. Residues 153 to 175 (GTLFWMEIVLVVFFGTEYVVRLW) traverse the membrane as a helical segment. Residues 176 to 191 (SAGCRSKYVGIWGRLR) lie on the Cytoplasmic side of the membrane. Residues 192–217 (FARKPISIIDLIVVVASMVVLCVGSK) traverse the membrane as a helical segment. Residues 218–225 (GQVFATSA) are Extracellular-facing. A helical; Voltage-sensor transmembrane segment spans residues 226–241 (IRGIRFLQILRMLHVD). An interaction with KCNE3 region spans residues 237-245 (MLHVDRQGG). Residues 242 to 259 (RQGGTWRLLGSVVFIHRQ) lie on the Cytoplasmic side of the membrane. Residue Q243 participates in a 1,2-diacyl-sn-glycero-3-phospho-(1D-myo-inositol-4,5-bisphosphate) binding. A helical transmembrane segment spans residues 260–282 (ELITTLYIGFLGLIFSSYFVYLA). At 283–298 (EKDAVNESGRIEFGSY) the chain is on the extracellular side. N-linked (GlcNAc...) asparagine glycosylation is present at N288. An intramembrane region (pore-forming) is located at residues 299–319 (ADALWWGVVTVTTIGYGDKVP). Residues 320–321 (QT) are Extracellular-facing. Residues 322-347 (WVGKTIASCFSVFAISFFALPAGILG) form a helical membrane-spanning segment. At 348-668 (SGFALKVQQK…VPQTGPDEGS (321 aa)) the chain is on the cytoplasmic side. The interaction with CALM stretch occupies residues 369–381 (AAASLIQTAWRCY). Phosphoserine occurs at positions 406 and 408. Residues 514–528 (KVIRRMQYFVAKKKF) form an interaction with CALM; calcium-dependent region. Positions 534–571 (PYDVRDVIEQYSQGHLNLMVRIKELQRRLDQSIGKPSL) are interaction with KCNE1 C-terminus. Residues 584–620 (SNTIGARLNRVEDKVTQLDQRLVIITDMLHQLLSMQQ) are a coiled coil. An interaction with AKAP9 region spans residues 587-615 (IGARLNRVEDKVTQLDQRLVIITDMLHQL). The segment at 588–619 (GARLNRVEDKVTQLDQRLVIITDMLHQLLSMQ) is C-terminal assembly domain (tetramerization).

Belongs to the potassium channel family. KQT (TC 1.A.1.15) subfamily. Kv7.1/KCNQ1 sub-subfamily. In terms of assembly, tetramer. Heterotetramer with KCNE1; form the native cardiac channel I(Ks) which increases the amplitude and slows down the activation kinetics of outward potassium current and targets to the membrane raft. Interacts (via C-terminus) with CALM; forms a heterooctameric structure (with 4:4 KCNQ1:CALM stoichiometry) in a calcium-independent manner. Interacts with AKAP9; targets protein kinase A (PKA) catalytic and regulatory subunits and protein phosphatase 1 (PP1) to the KCNQ1-KCNE1 complex, allowing PKA-mediated phosphorylation and increase of delayed rectifier potassium channel activity. Interacts with KCNE2; form an heterooligomer complex that targets to the membrane raft and leading to currents with an apparently instantaneous activation, a rapid deactivation process and a linear current-voltage relationship and decreases the amplitude of the outward current. Interacts with AP2M1; mediates estrogen-induced internalization via clathrin-coated vesicles. Interacts with NEDD4L; promotes internalization and decreases I(Ks) currents. Interacts with USP2; counteracts the NEDD4L-specific down-regulation of I(Ks) and restore plasma membrane localization. Heterotetramer with KCNQ5; has a voltage-gated potassium channel activity. Interacts with KCNE3; four KCNE3 molecules are bound to one KCNQ1 tetramer (4:4 KCNQ1:KCNE3 stoichiometry); alters membrane raft localization; affects KCNQ1 structure and gating properties. Interacts with KCNE4; impairs KCNQ1 localization in lipid rafts and inhibits voltage-gated potassium channel activity. Interacts with KCNE5; impairs KCNQ1 localization in lipid rafts and only conducts current upon strong and continued depolarization. Interacts with SLC5A3; forms coregulatory channel-transporter complexes that modulate Na(+)-coupled myo-inositol influx through the transporter. Post-translationally, phosphorylation at Ser-27 by PKA; increases delayed rectifier potassium channel activity of the KCNQ1-KCNE1 complex through a macromolecular complex that includes PKA, PP1, and the targeting protein AKAP9. Ubiquitinated by NEDD4L; promotes internalization. The ubiquitinylated form is internalized through a clathrin-mediated endocytosis by interacting with AP2M1 and is recycled back to the cell membrane via RAB4A and RAB11A. In terms of processing, deubiquitinated by USP2; counteracts the NEDD4L-specific down-regulation of I(Ks) and restores the membrane localization. In terms of tissue distribution, expressed in heart, kidney and salivary glands. Detected in the cochlea. Almost undetectable in brain, skeletal muscle and liver. Widely expressed in embryonic and neonatal tissues. Expressed in choroid plexus epithelium (at protein level).

It localises to the cell membrane. The protein localises to the cytoplasmic vesicle membrane. It is found in the early endosome. The protein resides in the membrane raft. Its subcellular location is the endoplasmic reticulum. It localises to the basolateral cell membrane. The protein localises to the apical cell membrane. It catalyses the reaction K(+)(in) = K(+)(out). Its activity is regulated as follows. PIP2 molecule is essential to activate KCNQ channels by inducing the coupling of the voltage-sensing domain (VSD) and the pore-forming domain (PD). Upon channel activation, PIP2 disrupts the VSD-calmodulin/CALM interactions, causing the release of CALM from the VSD which triggers the opening of the gate. Calcium potentiates KCNQ1 channel current through calcium-bound CALM. Calcium-bound CALM competes with PIP2 to stabilize the channel open state. Its function is as follows. Pore-forming subunit of the voltage-gated potassium (Kv) channel involved in the regulation of cardiomyocyte excitability and important in normal development and functions of myocardium, inner ear, stomach and colon. Associates with KCNE beta subunits that modulates current kinetics. Induces a voltage-dependent by rapidly activating and slowly deactivating potassium-selective outward current. Also promotes a delayed voltage activated potassium current showing outward rectification characteristic. During beta-adrenergic receptor stimulation participates in cardiac increases the amplitude and slows down the activation kinetics of outward potassium current I(Ks). Muscarinic agonist oxotremorine-M strongly suppresses KCNQ1/KCNE1 current. When associated with KCNE3, forms the potassium channel that is important for cyclic AMP-stimulated intestinal secretion of chloride ions. This interaction with KCNE3 is reduced by 17beta-estradiol, resulting in the reduction of currents. During conditions of increased substrate load, maintains the driving force for proximal tubular and intestinal sodium ions absorption, gastric acid secretion, and cAMP-induced jejunal chloride ions secretion. Allows the provision of potassium ions to the luminal membrane of the secretory canaliculus in the resting state as well as during stimulated acid secretion. When associated with KCNE2, forms a heterooligomer complex leading to currents with an apparently instantaneous activation, a rapid deactivation process and a linear current-voltage relationship and decreases the amplitude of the outward current. When associated with KCNE4, inhibits voltage-gated potassium channel activity. When associated with KCNE5, this complex only conducts current upon strong and continued depolarization. Also forms a heterotetramer with KCNQ5; has a voltage-gated potassium channel activity. Binds with phosphatidylinositol 4,5-bisphosphate. KCNQ1-KCNE2 channel associates with Na(+)-coupled myo-inositol symporter in the apical membrane of choroid plexus epithelium and regulates the myo-inositol gradient between blood and cerebrospinal fluid with an impact on neuron excitability. The chain is Potassium voltage-gated channel subfamily KQT member 1 from Mus musculus (Mouse).